We begin with the raw amino-acid sequence, 99 residues long: Integration host factor subunit alpha (99 aa).

The protein belongs to the bacterial histone-like protein family. In terms of assembly, heterodimer of an alpha and a beta chain.

Its function is as follows. This protein is one of the two subunits of integration host factor, a specific DNA-binding protein that functions in genetic recombination as well as in transcriptional and translational control. The sequence is that of Integration host factor subunit alpha from Psychrobacter arcticus (strain DSM 17307 / VKM B-2377 / 273-4).